The chain runs to 291 residues: Ribosomal RNA small subunit methyltransferase A (291 aa).

N33, V35, G60, E81, D111, and N129 together coordinate S-adenosyl-L-methionine.

Belongs to the class I-like SAM-binding methyltransferase superfamily. rRNA adenine N(6)-methyltransferase family. RsmA subfamily.

Its subcellular location is the cytoplasm. The enzyme catalyses adenosine(1518)/adenosine(1519) in 16S rRNA + 4 S-adenosyl-L-methionine = N(6)-dimethyladenosine(1518)/N(6)-dimethyladenosine(1519) in 16S rRNA + 4 S-adenosyl-L-homocysteine + 4 H(+). Its function is as follows. Specifically dimethylates two adjacent adenosines (A1518 and A1519) in the loop of a conserved hairpin near the 3'-end of 16S rRNA in the 30S particle. May play a critical role in biogenesis of 30S subunits. This chain is Ribosomal RNA small subunit methyltransferase A, found in Streptomyces griseus subsp. griseus (strain JCM 4626 / CBS 651.72 / NBRC 13350 / KCC S-0626 / ISP 5235).